The sequence spans 953 residues: Protein translocase subunit SecA 1 (953 aa).

ATP contacts are provided by residues glutamine 83, 101–105 (GEGKT), and aspartate 490. Residues 854 to 867 (AAAAAAKASDSAAK) are compositionally biased toward low complexity. Residues 854–953 (AAAAAAKASD…DRPAKSHRKG (100 aa)) are disordered. Residues 929–947 (SRRERREAARKQAKADRPA) are compositionally biased toward basic and acidic residues.

It belongs to the SecA family. In terms of assembly, monomer and homodimer. Part of the essential Sec protein translocation apparatus which comprises SecA, SecYEG and auxiliary proteins SecDF. Other proteins may also be involved.

The protein resides in the cell membrane. It is found in the cytoplasm. It carries out the reaction ATP + H2O + cellular proteinSide 1 = ADP + phosphate + cellular proteinSide 2.. In terms of biological role, part of the Sec protein translocase complex. Interacts with the SecYEG preprotein conducting channel. Has a central role in coupling the hydrolysis of ATP to the transfer of proteins into and across the cell membrane, serving as an ATP-driven molecular motor driving the stepwise translocation of polypeptide chains across the membrane. The protein is Protein translocase subunit SecA 1 of Mycolicibacterium smegmatis (strain ATCC 700084 / mc(2)155) (Mycobacterium smegmatis).